Here is a 386-residue protein sequence, read N- to C-terminus: Phosphoglycerate kinase (386 aa).

Substrate contacts are provided by residues 21-23 (DLN), Arg36, 59-62 (HLGR), Arg113, and Arg146. ATP-binding positions include Lys197, Glu314, and 340 to 343 (GGDT).

This sequence belongs to the phosphoglycerate kinase family. In terms of assembly, monomer.

The protein resides in the cytoplasm. It carries out the reaction (2R)-3-phosphoglycerate + ATP = (2R)-3-phospho-glyceroyl phosphate + ADP. It participates in carbohydrate degradation; glycolysis; pyruvate from D-glyceraldehyde 3-phosphate: step 2/5. This is Phosphoglycerate kinase from Marinobacter nauticus (strain ATCC 700491 / DSM 11845 / VT8) (Marinobacter aquaeolei).